We begin with the raw amino-acid sequence, 242 residues long: Myogenic factor 6 (242 aa).

The interval Ser31–Leu63 is disordered. Positions Asp93–Leu144 constitute a bHLH domain.

As to quaternary structure, efficient DNA binding requires dimerization with another bHLH protein. Interacts with CSRP3.

It localises to the nucleus. In terms of biological role, involved in muscle differentiation (myogenic factor). Induces fibroblasts to differentiate into myoblasts. Probable sequence specific DNA-binding protein. This chain is Myogenic factor 6 (MYF6), found in Bos taurus (Bovine).